Here is a 316-residue protein sequence, read N- to C-terminus: Ornithine carbamoyltransferase (316 aa).

Carbamoyl phosphate contacts are provided by residues 59–62 (STRT), Q86, R110, and 137–140 (HPCQ). L-ornithine contacts are provided by residues N168, D232, and 236 to 237 (SM). Carbamoyl phosphate is bound by residues 273-274 (CL) and R301.

Belongs to the aspartate/ornithine carbamoyltransferase superfamily. OTCase family.

It localises to the cytoplasm. It catalyses the reaction carbamoyl phosphate + L-ornithine = L-citrulline + phosphate + H(+). Its pathway is amino-acid biosynthesis; L-arginine biosynthesis; L-arginine from L-ornithine and carbamoyl phosphate: step 1/3. Functionally, reversibly catalyzes the transfer of the carbamoyl group from carbamoyl phosphate (CP) to the N(epsilon) atom of ornithine (ORN) to produce L-citrulline. This chain is Ornithine carbamoyltransferase (argF), found in Listeria monocytogenes serovar 1/2a (strain ATCC BAA-679 / EGD-e).